A 510-amino-acid chain; its full sequence is 2,3-bisphosphoglycerate-independent phosphoglycerate mutase (510 aa).

Mn(2+) contacts are provided by Asp-10 and Ser-60. Ser-60 (phosphoserine intermediate) is an active-site residue. Substrate-binding positions include His-121, 150–151, Arg-182, Arg-188, 252–255, and Lys-325; these read RD and RPDR. Mn(2+)-binding residues include Asp-392, His-396, Asp-433, His-434, and His-451.

This sequence belongs to the BPG-independent phosphoglycerate mutase family. It depends on Mn(2+) as a cofactor.

The protein localises to the plastid. It localises to the chloroplast. It carries out the reaction (2R)-2-phosphoglycerate = (2R)-3-phosphoglycerate. It participates in carbohydrate degradation; glycolysis; pyruvate from D-glyceraldehyde 3-phosphate: step 3/5. Its function is as follows. Catalyzes the interconversion of 2-phosphoglycerate and 3-phosphoglycerate. This chain is 2,3-bisphosphoglycerate-independent phosphoglycerate mutase, found in Gracilaria tenuistipitata var. liui (Red alga).